A 249-amino-acid polypeptide reads, in one-letter code: Triosephosphate isomerase (249 aa).

2 residues coordinate substrate: Asn12 and Lys14. Position 14 is an N6-acetyllysine (Lys14). Position 68 is a 3'-nitrotyrosine (Tyr68). A Phosphoserine modification is found at Ser80. His96 functions as the Electrophile in the catalytic mechanism. Residue Ser106 is modified to Phosphoserine. Residue Lys142 forms a Glycyl lysine isopeptide (Lys-Gly) (interchain with G-Cter in SUMO1) linkage. Residue Lys149 is modified to N6-succinyllysine. Lys156 carries the N6-acetyllysine; alternate modification. N6-succinyllysine; alternate is present on Lys156. Ser159 carries the phosphoserine modification. The Proton acceptor role is filled by Glu166. At Thr173 the chain carries Phosphothreonine. Lys194 is subject to N6-acetyllysine; alternate. Lys194 bears the N6-succinyllysine; alternate mark. Lys194 is subject to N6-methyllysine; alternate. Ser198 is modified (phosphoserine). Tyr209 carries the 3'-nitrotyrosine modification. Ser212 carries the phosphoserine modification. The residue at position 214 (Thr214) is a Phosphothreonine. Position 223 is a phosphoserine (Ser223). Lys238 bears the N6-acetyllysine mark.

Belongs to the triosephosphate isomerase family. As to quaternary structure, homodimer.

The protein localises to the cytoplasm. It carries out the reaction dihydroxyacetone phosphate = methylglyoxal + phosphate. The enzyme catalyses D-glyceraldehyde 3-phosphate = dihydroxyacetone phosphate. Its pathway is carbohydrate degradation; glycolysis; D-glyceraldehyde 3-phosphate from glycerone phosphate: step 1/1. It functions in the pathway carbohydrate biosynthesis; gluconeogenesis. Functionally, triosephosphate isomerase is an extremely efficient metabolic enzyme that catalyzes the interconversion between dihydroxyacetone phosphate (DHAP) and D-glyceraldehyde-3-phosphate (G3P) in glycolysis and gluconeogenesis. It is also responsible for the non-negligible production of methylglyoxal a reactive cytotoxic side-product that modifies and can alter proteins, DNA and lipids. The polypeptide is Triosephosphate isomerase (TPI1) (Pongo abelii (Sumatran orangutan)).